A 305-amino-acid chain; its full sequence is Tetraspanin-12 (305 aa).

Residues 1-12 are Cytoplasmic-facing; the sequence is MAREDSVKCLRC. Residues Cys9 and Cys12 are each lipidated (S-palmitoyl cysteine). A helical membrane pass occupies residues 13–33; that stretch reads LLYALNLLFWLMSISVLAVSA. Residues 34-59 lie on the Extracellular side of the membrane; that stretch reads WMRDYLNNVLTLTAETRVEEAVILTY. Residues 60–80 traverse the membrane as a helical segment; that stretch reads FPVVHPVMIAVCCFLIIVGML. The Cytoplasmic segment spans residues 81 to 89; sequence GYCGTVKRN. Cys83 carries the S-palmitoyl cysteine lipid modification. The helical transmembrane segment at 90–110 threads the bilayer; that stretch reads LLLLAWYFGSLLVIFCVELAC. Residues 111–224 are Extracellular-facing; that stretch reads GVWTYEQELM…RGTKQLQVLR (114 aa). The helical transmembrane segment at 225-245 threads the bilayer; that stretch reads FLGISIGVTQILAMILTITLL. Residues 246–305 are Cytoplasmic-facing; it reads WALYYDRREPGTDQMMSLKNDNSQHLSCPSVELLKPSLSRIFEHTSMANSFNTHFEMEEL.

It belongs to the tetraspanin (TM4SF) family. In terms of assembly, component of a complex, at least composed of TSPAN12, FZD4 and norrin (NDP). Interacts (when palmitoylated) with ADAM10. Interacts with MMP14/MT1-MMP. Palmitoylated; required for interaction with ADAM10. The precise position of palmitoylated residues is unclear and occurs either on Cys-9, Cys-12 and/or Cys-83.

The protein resides in the cell membrane. Its function is as follows. Regulator of cell surface receptor signal transduction. Plays a central role in retinal vascularization by regulating norrin (NDP) signal transduction. Acts in concert with norrin (NDP) to promote FZD4 multimerization and subsequent activation of FZD4, leading to promote accumulation of beta-catenin (CTNNB1) and stimulate LEF/TCF-mediated transcriptional programs. Suprisingly, it only activates the norrin (NDP)-dependent activation of FZD4, while it does not activate the Wnt-dependent activation of FZD4, suggesting the existence of a Wnt-independent signaling that also promote accumulation the beta-catenin (CTNNB1). Acts as a regulator of membrane proteinases such as ADAM10 and MMP14/MT1-MMP. Activates ADAM10-dependent cleavage activity of amyloid precursor protein (APP). Activates MMP14/MT1-MMP-dependent cleavage activity. The chain is Tetraspanin-12 (TSPAN12) from Homo sapiens (Human).